Here is a 416-residue protein sequence, read N- to C-terminus: Putative competence-damage inducible protein (416 aa).

This sequence belongs to the CinA family.

The chain is Putative competence-damage inducible protein from Levilactobacillus brevis (strain ATCC 367 / BCRC 12310 / CIP 105137 / JCM 1170 / LMG 11437 / NCIMB 947 / NCTC 947) (Lactobacillus brevis).